The following is a 136-amino-acid chain: Large ribosomal subunit protein uL16c (136 aa).

Residues 1-20 are disordered; that stretch reads MLSPKRTRFRKQHRGRMKGK.

Belongs to the universal ribosomal protein uL16 family. Part of the 50S ribosomal subunit.

Its subcellular location is the plastid. It is found in the chloroplast. This chain is Large ribosomal subunit protein uL16c, found in Lolium perenne (Perennial ryegrass).